Here is a 371-residue protein sequence, read N- to C-terminus: Chemerin-like receptor 1 (371 aa).

Residues 1–39 lie on the Extracellular side of the membrane; the sequence is MEYDAYNDSGIYDDEYSDGFGYFVDLEEASPWEAKVAPV. Asparagine 7 is a glycosylation site (N-linked (GlcNAc...) asparagine). A helical membrane pass occupies residues 40–62; it reads FLVVIYSLVCFLGLLGNGLVIVI. The Cytoplasmic segment spans residues 63–73; it reads ATFKMKKTVNT. Residues 74–95 form a helical membrane-spanning segment; the sequence is VWFVNLAVADFLFNIFLPMHIT. Residues 96–112 lie on the Extracellular side of the membrane; sequence YAAMDYHWVFGKAMCKI. A disulfide bridge connects residues cysteine 110 and cysteine 187. The chain crosses the membrane as a helical span at residues 113-133; that stretch reads SNFLLSHNMYTSVFLLTVISF. The Cytoplasmic portion of the chain corresponds to 134-152; sequence DRCISVLLPVWSQNHRSIR. The chain crosses the membrane as a helical span at residues 153–174; that stretch reads LAYMTCSAVWVLAFFLSSPSLV. At 175-222 the chain is on the extracellular side; that stretch reads FRDTANIHGKITCFNNFSLAAPESSPHPAHSQVVSTGYSRHVAVTVTR. Asparagine 190 is a glycosylation site (N-linked (GlcNAc...) asparagine). Residues 223–243 traverse the membrane as a helical segment; sequence FLCGFLIPVFIITACYLTIVF. At 244-259 the chain is on the cytoplasmic side; the sequence is KLQRNRLAKNKKPFKI. A helical transmembrane segment spans residues 260 to 280; it reads IITIIITFFLCWCPYHTLYLL. Over 281–298 the chain is Extracellular; that stretch reads ELHHTAVPSSVFSLGLPL. The helical transmembrane segment at 299-318 threads the bilayer; the sequence is ATAVAIANSCMNPILYVFMG. Topologically, residues 319 to 371 are cytoplasmic; that stretch reads HDFRKFKVALFSRLANALSEDTGPSSYPSHRSFTKMSSLNEKASVNEKETSTL. Serine 337 bears the Phosphoserine mark. Phosphothreonine is present on threonine 340. Phosphoserine occurs at positions 347, 350, and 356. Residue threonine 370 is modified to Phosphothreonine.

The protein belongs to the chemokine-like receptor (CMKLR) family. As to expression, expressed in the differentiated adipocytes (at protein level). Ubiquitous. Highly expressed in adipose tissue and immature plasmacytoid dendritic cells (DCs) and at lower levels in myeloid DCs, macrophages, and NK cells. Expressed on macrophages isolated from different tissues, including peritoneal cavities, pleural cavities and spleen.

The protein localises to the cell membrane. Receptor for the chemoattractant adipokine chemerin/RARRES2 and for the omega-3 fatty acid derived molecule resolvin E1. Interaction with RARRES2 initiates activation of G proteins G(i)/G(o) and beta-arrestin pathways inducing cellular responses via second messenger pathways such as intracellular calcium mobilization, phosphorylation of MAP kinases MAPK1/MAPK3 (ERK1/2), TYRO3, MAPK14/P38MAPK and PI3K leading to multifunctional effects, like, reduction of immune responses, enhancing of adipogenesis and angionesis. Resolvin E1 down-regulates cytokine production in macrophages by reducing the activation of MAPK1/3 (ERK1/2) and NF-kappa-B. Positively regulates adipogenesis and adipocyte metabolism. The chain is Chemerin-like receptor 1 (Cmklr1) from Mus musculus (Mouse).